The following is a 391-amino-acid chain: MAMAAAAVIVPLGILFFISGLVVNLLQAVCYVLIRPLSKNTYRKINRVVAETLWLELVWIVDWWAGVKIQVFADDETFNRMGKEHALVVCNHRSDIDWLVGWILAQRSGCLGSALAVMKKSSKFLPVIGWSMWFSEYLFLERNWAKDESTLKSGLQRLNDFPRPFWLALFVEGTRFTEAKLKAAQEYAATSQLPVPRNVLIPRTKGFVSAVSNMRSFVPAIYDMTVAIPKTSPPPTMLRLFKGQPSVVHVHIKCHSMKDLPESEDEIAQWCRDQFVAKDALLDKHIAADTFPGQKEQNIDRPIKSLAVVVSWACLLTLGAMKFLHWSNLFSSLKGIALSALGLGIITLCMQILIRSSQSERSTPAKVAPAKPKDKHQSGSSSQTEVEEKQK.

A helical transmembrane segment spans residues 3–23 (MAAAAVIVPLGILFFISGLVV). The HXXXXD motif signature appears at 92-97 (HRSDID). The next 2 helical transmembrane spans lie at 306–326 (LAVV…FLHW) and 334–354 (KGIA…QILI). Positions 358 to 391 (QSERSTPAKVAPAKPKDKHQSGSSSQTEVEEKQK) are disordered.

This sequence belongs to the 1-acyl-sn-glycerol-3-phosphate acyltransferase family.

The protein resides in the endoplasmic reticulum membrane. The catalysed reaction is a 1-acyl-sn-glycero-3-phosphate + an acyl-CoA = a 1,2-diacyl-sn-glycero-3-phosphate + CoA. It functions in the pathway phospholipid metabolism; CDP-diacylglycerol biosynthesis; CDP-diacylglycerol from sn-glycerol 3-phosphate: step 2/3. Its function is as follows. Converts lysophosphatidic acid (LPA) into phosphatidic acid by incorporating acyl moiety at the 2 position. In Brassica oleracea (Wild cabbage), this protein is 1-acyl-sn-glycerol-3-phosphate acyltransferase 2 (LPAT2).